Here is a 502-residue protein sequence, read N- to C-terminus: Lysine--tRNA ligase (502 aa).

The Mg(2+) site is built by glutamate 413 and glutamate 420.

Belongs to the class-II aminoacyl-tRNA synthetase family. Homodimer. The cofactor is Mg(2+).

It localises to the cytoplasm. The enzyme catalyses tRNA(Lys) + L-lysine + ATP = L-lysyl-tRNA(Lys) + AMP + diphosphate. The protein is Lysine--tRNA ligase of Aromatoleum aromaticum (strain DSM 19018 / LMG 30748 / EbN1) (Azoarcus sp. (strain EbN1)).